The primary structure comprises 449 residues: Exodeoxyribonuclease 7 large subunit (449 aa).

This sequence belongs to the XseA family. As to quaternary structure, heterooligomer composed of large and small subunits.

The protein localises to the cytoplasm. The enzyme catalyses Exonucleolytic cleavage in either 5'- to 3'- or 3'- to 5'-direction to yield nucleoside 5'-phosphates.. In terms of biological role, bidirectionally degrades single-stranded DNA into large acid-insoluble oligonucleotides, which are then degraded further into small acid-soluble oligonucleotides. In Aliivibrio fischeri (strain ATCC 700601 / ES114) (Vibrio fischeri), this protein is Exodeoxyribonuclease 7 large subunit.